The sequence spans 389 residues: DEAD-box ATP-dependent RNA helicase CshC (389 aa).

The short motif at 1 to 26 is the Q motif element; that stretch reads MIKDMQPFLQQAWEKAGFKELTEIQK. The region spanning 29–199 is the Helicase ATP-binding domain; that stretch reads IPTILEGQDV…RDLAVEPQLV (171 aa). 42–49 serves as a coordination point for ATP; it reads SPTGTGKT. Positions 147–150 match the DEAD box motif; sequence DEFD. The Helicase C-terminal domain maps to 209–379; sequence LVEHTYIICE…TKPKAPKKKK (171 aa). The tract at residues 368 to 389 is disordered; it reads VETKPKAPKKKKPAFTGKKKPR. Residues 373–389 show a composition bias toward basic residues; the sequence is KAPKKKKPAFTGKKKPR.

The enzyme catalyses ATP + H2O = ADP + phosphate + H(+). Its function is as follows. DEAD-box RNA helicase. Probably has an RNA-dependent ATPase activity and a 3' to 5' RNA helicase activity that uses the energy of ATP hydrolysis to destabilize and unwind short RNA duplexes. This chain is DEAD-box ATP-dependent RNA helicase CshC (cshC), found in Bacillus cereus (strain ATCC 14579 / DSM 31 / CCUG 7414 / JCM 2152 / NBRC 15305 / NCIMB 9373 / NCTC 2599 / NRRL B-3711).